Reading from the N-terminus, the 127-residue chain is MARVKRAVNAHKKRRAILEQASGYRGQRSRLYRKAKEQVTHSLVYNYNDRKKRKGDFRQLWIQRINAAARANGITYNRFIQGLKAANVEVDRKILAELAVNDPNAFAALVEVAQKALPSDVNAPKAA.

It belongs to the bacterial ribosomal protein bL20 family.

Binds directly to 23S ribosomal RNA and is necessary for the in vitro assembly process of the 50S ribosomal subunit. It is not involved in the protein synthesizing functions of that subunit. The protein is Large ribosomal subunit protein bL20 (rplT) of Streptomyces coelicolor (strain ATCC BAA-471 / A3(2) / M145).